Reading from the N-terminus, the 201-residue chain is MKAIILAGGHSERFGKAKAFAEIDGQLFYQRIVQTLQETNMFNDIIISTNDQLANQFKHDNVIIDDANNKNKGPLAGIHTVMKQYNDEELFFVISVDTPMVTGKAISALYQFLVSRLIEDQIDIAAYSEHNRVIPTIAFYHPNCINVMDEALASNDYSLRHVYNNVTTECLDVTNIQSPEYWYKNINYQEDLDDLKQQINH.

GTP-binding positions include L6 to G8, K18, D65, and D97. Residue D97 coordinates Mg(2+).

It belongs to the MobA family. Mg(2+) is required as a cofactor.

It localises to the cytoplasm. The catalysed reaction is Mo-molybdopterin + GTP + H(+) = Mo-molybdopterin guanine dinucleotide + diphosphate. Transfers a GMP moiety from GTP to Mo-molybdopterin (Mo-MPT) cofactor (Moco or molybdenum cofactor) to form Mo-molybdopterin guanine dinucleotide (Mo-MGD) cofactor. The polypeptide is Probable molybdenum cofactor guanylyltransferase (Staphylococcus haemolyticus (strain JCSC1435)).